The sequence spans 335 residues: Nicotinate-nucleotide--dimethylbenzimidazole phosphoribosyltransferase (335 aa).

Glutamate 304 (proton acceptor) is an active-site residue.

This sequence belongs to the CobT family.

The catalysed reaction is 5,6-dimethylbenzimidazole + nicotinate beta-D-ribonucleotide = alpha-ribazole 5'-phosphate + nicotinate + H(+). The protein operates within nucleoside biosynthesis; alpha-ribazole biosynthesis; alpha-ribazole from 5,6-dimethylbenzimidazole: step 1/2. Its function is as follows. Catalyzes the synthesis of alpha-ribazole-5'-phosphate from nicotinate mononucleotide (NAMN) and 5,6-dimethylbenzimidazole (DMB). The chain is Nicotinate-nucleotide--dimethylbenzimidazole phosphoribosyltransferase from Thermus thermophilus (strain ATCC 27634 / DSM 579 / HB8).